The following is a 304-amino-acid chain: ATP phosphoribosyltransferase (304 aa).

The protein belongs to the ATP phosphoribosyltransferase family. Long subfamily. Mg(2+) is required as a cofactor.

The protein localises to the cytoplasm. The catalysed reaction is 1-(5-phospho-beta-D-ribosyl)-ATP + diphosphate = 5-phospho-alpha-D-ribose 1-diphosphate + ATP. It functions in the pathway amino-acid biosynthesis; L-histidine biosynthesis; L-histidine from 5-phospho-alpha-D-ribose 1-diphosphate: step 1/9. With respect to regulation, feedback inhibited by histidine. Its function is as follows. Catalyzes the condensation of ATP and 5-phosphoribose 1-diphosphate to form N'-(5'-phosphoribosyl)-ATP (PR-ATP). Has a crucial role in the pathway because the rate of histidine biosynthesis seems to be controlled primarily by regulation of HisG enzymatic activity. The chain is ATP phosphoribosyltransferase from Xanthomonas campestris pv. campestris (strain 8004).